We begin with the raw amino-acid sequence, 88 residues long: Small ribosomal subunit protein uS15 (88 aa).

Belongs to the universal ribosomal protein uS15 family. In terms of assembly, part of the 30S ribosomal subunit. Forms a bridge to the 50S subunit in the 70S ribosome, contacting the 23S rRNA.

Functionally, one of the primary rRNA binding proteins, it binds directly to 16S rRNA where it helps nucleate assembly of the platform of the 30S subunit by binding and bridging several RNA helices of the 16S rRNA. Its function is as follows. Forms an intersubunit bridge (bridge B4) with the 23S rRNA of the 50S subunit in the ribosome. The sequence is that of Small ribosomal subunit protein uS15 from Hydrogenovibrio crunogenus (strain DSM 25203 / XCL-2) (Thiomicrospira crunogena).